A 442-amino-acid polypeptide reads, in one-letter code: UDP-N-acetylmuramoylalanine--D-glutamate ligase (442 aa).

115 to 121 (GSNGKST) serves as a coordination point for ATP.

This sequence belongs to the MurCDEF family.

It localises to the cytoplasm. The catalysed reaction is UDP-N-acetyl-alpha-D-muramoyl-L-alanine + D-glutamate + ATP = UDP-N-acetyl-alpha-D-muramoyl-L-alanyl-D-glutamate + ADP + phosphate + H(+). It participates in cell wall biogenesis; peptidoglycan biosynthesis. In terms of biological role, cell wall formation. Catalyzes the addition of glutamate to the nucleotide precursor UDP-N-acetylmuramoyl-L-alanine (UMA). This chain is UDP-N-acetylmuramoylalanine--D-glutamate ligase, found in Aliivibrio salmonicida (strain LFI1238) (Vibrio salmonicida (strain LFI1238)).